Consider the following 75-residue polypeptide: Small ribosomal subunit protein bS18 (75 aa).

This sequence belongs to the bacterial ribosomal protein bS18 family. Part of the 30S ribosomal subunit. Forms a tight heterodimer with protein bS6.

In terms of biological role, binds as a heterodimer with protein bS6 to the central domain of the 16S rRNA, where it helps stabilize the platform of the 30S subunit. The polypeptide is Small ribosomal subunit protein bS18 (Wigglesworthia glossinidia brevipalpis).